Reading from the N-terminus, the 1885-residue chain is Chitin synthase 5 (1885 aa).

Residues 1 to 789 enclose the Myosin motor domain; it reads MATRGNVPAH…SIALTGSQAA (789 aa). 99–106 contributes to the ATP binding site; it reads GESGSGKT. 2 N-linked (GlcNAc...) asparagine glycosylation sites follow: asparagine 219 and asparagine 429. The interval 601 to 649 is disordered; that stretch reads KPLRMPSVSRKKHDQLRRMASRRADRSPAPQEEEPLPGTEEAKVRRTKP. Residues 609-621 show a composition bias toward basic residues; it reads SRKKHDQLRRMAS. Residues 666–690 form an actin-binding region; sequence LDNITKSLTAPNVNNYFVFCLKPND. A glycan (N-linked (GlcNAc...) asparagine) is linked at asparagine 668. The disordered stretch occupies residues 794-817; sequence GDIGSPSRPDTPGHNPFSDSKARL. Transmembrane regions (helical) follow at residues 894–914 and 929–949; these read WLAI…KWIG and FAIN…IIVF. One can recognise a Cytochrome b5 heme-binding domain in the interval 957 to 1016; the sequence is QNVYSAAELSAHDGKGKHSAYVAIRGQVFDLGAFMPNHYPKIIPQSSLKKYAGVDATGLF. N-linked (GlcNAc...) asparagine glycans are attached at residues asparagine 1043 and asparagine 1068. The helical transmembrane segment at 1205–1225 threads the bilayer; sequence ILLAVSILLCSVIGFKFFAAL. N-linked (GlcNAc...) asparagine glycosylation is found at asparagine 1462 and asparagine 1568. Helical transmembrane passes span 1599–1619, 1626–1646, and 1653–1673; these read LLST…IVLL, VPLT…IIFI, and MIGW…GLPL. 2 N-linked (GlcNAc...) asparagine glycosylation sites follow: asparagine 1759 and asparagine 1790. The 56-residue stretch at 1827–1882 folds into the DEK-C domain; the sequence is LPTDDMLLNEIRDILRTADLMTVTKKGIKQELERRFNVNLDMKRAYIGSATEAILS.

This sequence in the N-terminal section; belongs to the TRAFAC class myosin-kinesin ATPase superfamily. Myosin family. The protein in the C-terminal section; belongs to the chitin synthase family. Class V subfamily. Maximal activity requires trypsin activation, suggesting a zymogenic nature.

It is found in the cell membrane. It localises to the membrane. The enzyme catalyses [(1-&gt;4)-N-acetyl-beta-D-glucosaminyl](n) + UDP-N-acetyl-alpha-D-glucosamine = [(1-&gt;4)-N-acetyl-beta-D-glucosaminyl](n+1) + UDP + H(+). Polymerizes chitin, a structural polymer of the cell wall and septum, by transferring the sugar moiety of UDP-GlcNAc to the non-reducing end of the growing chitin polymer. CHS5 is required for the sustained growth at 37 degrees Celsius and is of critical importance for virulence. Especially important at infection temperatures for maintaining the cell wall integrity of developing yeast buds, elongating tips of hyphae, and random sites of expansion in sclerotic forms. The polypeptide is Chitin synthase 5 (Exophiala dermatitidis (strain ATCC 34100 / CBS 525.76 / NIH/UT8656) (Black yeast)).